The sequence spans 329 residues: uncharacterized protein (329 aa).

Helical transmembrane passes span 9–29, 53–73, 105–125, 126–146, 154–174, 179–199, 210–230, 240–260, 273–293, and 296–316; these read LMGLLIVLLAAIFFCFHNVIV, SHSFLLLLLRMLWVVPLMALI, FLMFLYLVLLYISISFIPTGI, AITLFFTYPIFTALLAWRLFN, WLVIGLTLIGTFLTIPYAYGG, LVLGVSTGIASGIVYAGYTVF, VPFTWISFATTLILSILCLII, WLAITIGSLLSALFTLAGHVL, AAIIGATNPALTVVLAGLAIQ, and LTNIQIFGVCLVTFSIALLNY. EamA domains lie at 103-169 and 191-316; these read CGFL…LTIP and IVYA…LLNY.

This sequence belongs to the EamA transporter family.

The protein resides in the cell membrane. This is an uncharacterized protein from Synechocystis sp. (strain ATCC 27184 / PCC 6803 / Kazusa).